A 240-amino-acid polypeptide reads, in one-letter code: Methylthioribulose-1-phosphate dehydratase (240 aa).

The span at 1–17 (MAQEVENNNNDHLVQSS) shows a compositional bias: polar residues. A disordered region spans residues 1-20 (MAQEVENNNNDHLVQSSDPE). C100 is a binding site for substrate. Zn(2+) contacts are provided by H117 and H119. E146 acts as the Proton donor/acceptor in catalysis. H202 contributes to the Zn(2+) binding site.

The protein belongs to the aldolase class II family. MtnB subfamily. Zn(2+) serves as cofactor.

The protein localises to the cytoplasm. It carries out the reaction 5-(methylsulfanyl)-D-ribulose 1-phosphate = 5-methylsulfanyl-2,3-dioxopentyl phosphate + H2O. It participates in amino-acid biosynthesis; L-methionine biosynthesis via salvage pathway; L-methionine from S-methyl-5-thio-alpha-D-ribose 1-phosphate: step 2/6. Functionally, catalyzes the dehydration of methylthioribulose-1-phosphate (MTRu-1-P) into 2,3-diketo-5-methylthiopentyl-1-phosphate (DK-MTP-1-P). The protein is Methylthioribulose-1-phosphate dehydratase of Neosartorya fischeri (strain ATCC 1020 / DSM 3700 / CBS 544.65 / FGSC A1164 / JCM 1740 / NRRL 181 / WB 181) (Aspergillus fischerianus).